Here is a 94-residue protein sequence, read N- to C-terminus: Co-chaperonin GroES (94 aa).

Belongs to the GroES chaperonin family. Heptamer of 7 subunits arranged in a ring. Interacts with the chaperonin GroEL.

The protein localises to the cytoplasm. Together with the chaperonin GroEL, plays an essential role in assisting protein folding. The GroEL-GroES system forms a nano-cage that allows encapsulation of the non-native substrate proteins and provides a physical environment optimized to promote and accelerate protein folding. GroES binds to the apical surface of the GroEL ring, thereby capping the opening of the GroEL channel. The sequence is that of Co-chaperonin GroES from Staphylococcus epidermidis (strain ATCC 35984 / DSM 28319 / BCRC 17069 / CCUG 31568 / BM 3577 / RP62A).